The primary structure comprises 145 residues: D-aminoacyl-tRNA deacylase (145 aa).

Positions 137-138 (GP) match the Gly-cisPro motif, important for rejection of L-amino acids motif.

This sequence belongs to the DTD family. Homodimer.

Its subcellular location is the cytoplasm. It carries out the reaction glycyl-tRNA(Ala) + H2O = tRNA(Ala) + glycine + H(+). The catalysed reaction is a D-aminoacyl-tRNA + H2O = a tRNA + a D-alpha-amino acid + H(+). Its function is as follows. An aminoacyl-tRNA editing enzyme that deacylates mischarged D-aminoacyl-tRNAs. Also deacylates mischarged glycyl-tRNA(Ala), protecting cells against glycine mischarging by AlaRS. Acts via tRNA-based rather than protein-based catalysis; rejects L-amino acids rather than detecting D-amino acids in the active site. By recycling D-aminoacyl-tRNA to D-amino acids and free tRNA molecules, this enzyme counteracts the toxicity associated with the formation of D-aminoacyl-tRNA entities in vivo and helps enforce protein L-homochirality. The polypeptide is D-aminoacyl-tRNA deacylase (Salmonella typhi).